A 435-amino-acid chain; its full sequence is Transcription factor gkaF (435 aa).

Over residues 1–19 the composition is skewed to basic and acidic residues; it reads MGRPQRGDTAKERRERQDK. Disordered stretches follow at residues 1–40, 115–158, and 231–257; these read MGRP…TVDW, STTA…SSQS, and FSSE…FLAP. Polar residues predominate over residues 28–40; the sequence is PISQSGLSDTVDW. Residues 143–158 show a composition bias toward low complexity; the sequence is SQSSDSSKPSSTSSQS.

Its subcellular location is the nucleus. Functionally, transcription factor; part of the gene cluster that mediates the biosynthesis of GKK1032, fungal natural products containing a macrocyclic para-cyclophane connected to a decahydrofluorene ring system that show potent antitumor activities. In Penicillium citrinum, this protein is Transcription factor gkaF.